The chain runs to 136 residues: Classical arabinogalactan protein 26 (136 aa).

The N-terminal stretch at 1–21 (MSVSLFTAFTVLSLCLHTSTS) is a signal peptide. Positions 38 to 95 (APSSFSASTPAMSPDTSPLFPTPGSSEMSPSPSESSIMPTIPSSLSPPNPDAVTPDPL) are disordered. Positions 40–53 (SSFSASTPAMSPDT) are enriched in polar residues. Residues 59–81 (TPGSSEMSPSPSESSIMPTIPSS) are compositionally biased toward low complexity. Ser108 carries GPI-anchor amidated serine lipidation. Positions 109–136 (SSVCLVSSQLSSLLLVLLMLLLAFCSFF) are cleaved as a propeptide — removed in mature form.

The protein belongs to the classical AGP family. Post-translationally, O-glycosylated on the hydroxyproline residues.

It localises to the cell membrane. Functionally, proteoglycan that seems to be implicated in diverse developmental roles such as differentiation, cell-cell recognition, embryogenesis and programmed cell death. The chain is Classical arabinogalactan protein 26 (AGP26) from Arabidopsis thaliana (Mouse-ear cress).